The following is a 432-amino-acid chain: Trigger factor (432 aa).

One can recognise a PPIase FKBP-type domain in the interval 161-246; the sequence is GSRATIDFVG…LNKVEARELP (86 aa).

It belongs to the FKBP-type PPIase family. Tig subfamily.

It is found in the cytoplasm. It carries out the reaction [protein]-peptidylproline (omega=180) = [protein]-peptidylproline (omega=0). In terms of biological role, involved in protein export. Acts as a chaperone by maintaining the newly synthesized protein in an open conformation. Functions as a peptidyl-prolyl cis-trans isomerase. The chain is Trigger factor from Vibrio atlanticus (strain LGP32) (Vibrio splendidus (strain Mel32)).